Consider the following 185-residue polypeptide: Elongation factor P (185 aa).

It belongs to the elongation factor P family.

It is found in the cytoplasm. It participates in protein biosynthesis; polypeptide chain elongation. Its function is as follows. Involved in peptide bond synthesis. Stimulates efficient translation and peptide-bond synthesis on native or reconstituted 70S ribosomes in vitro. Probably functions indirectly by altering the affinity of the ribosome for aminoacyl-tRNA, thus increasing their reactivity as acceptors for peptidyl transferase. The chain is Elongation factor P from Burkholderia multivorans (strain ATCC 17616 / 249).